The primary structure comprises 379 residues: EP300-interacting inhibitor of differentiation 3 (379 aa).

Positions 32–58 (LKQVEEEEEVEALKVEVAAASDTESDT) form a coiled coil.

Belongs to the NSE4 family. In terms of assembly, component of the SMC5-SMC6 complex which consists at least of SMC5, SMC6, NSMCE2, NSMCE1, NSMCE4A or EID3 and NSMCE3. NSMCE1, NSMCE4A or EID3 and NSMCE3 probably form a subcomplex that bridges the head domains of the SMC5:SMC6 heterodimer. Homodimer, and heterodimer with EID2. Interacts with the C-terminal region of CREBBP.

It is found in the nucleus. It localises to the cytoplasm. The protein resides in the chromosome. The protein localises to the telomere. Its function is as follows. Tissue-specific component of the SMC5-SMC6 complex, a complex involved in repair of DNA double-strand breaks by homologous recombination. The complex may promote sister chromatid homologous recombination by recruiting the SMC1-SMC3 cohesin complex to double-strand breaks. The complex is required for telomere maintenance via recombination and mediates sumoylation of shelterin complex (telosome) components. Functionally, acts as a repressor of nuclear receptor-dependent transcription possibly by interfering with CREBBP-dependent coactivation. May function as a coinhibitor of other CREBBP/EP300-dependent transcription factors. This chain is EP300-interacting inhibitor of differentiation 3, found in Bos taurus (Bovine).